The following is a 272-amino-acid chain: Eukaryotic translation initiation factor 3 subunit G (272 aa).

2 disordered regions span residues 1 to 28 (MPAL…PTEI) and 143 to 187 (AGKA…RGRD). Residues 190-268 (TAIRISNLSE…LILNVEWSKP (79 aa)) form the RRM domain.

Belongs to the eIF-3 subunit G family. As to quaternary structure, component of the eukaryotic translation initiation factor 3 (eIF-3) complex.

The protein localises to the cytoplasm. Its function is as follows. RNA-binding component of the eukaryotic translation initiation factor 3 (eIF-3) complex, which is involved in protein synthesis of a specialized repertoire of mRNAs and, together with other initiation factors, stimulates binding of mRNA and methionyl-tRNAi to the 40S ribosome. The eIF-3 complex specifically targets and initiates translation of a subset of mRNAs involved in cell proliferation. This subunit can bind 18S rRNA. The sequence is that of Eukaryotic translation initiation factor 3 subunit G from Culex quinquefasciatus (Southern house mosquito).